A 314-amino-acid polypeptide reads, in one-letter code: MVTYLLANFGGPRTSQEIVSFLQALLTDRDVTGGMIPSVLHRPLFSYIAKRRAPHVARQYAYLGGGSPIFQDTERLAQNLSQELQASVIPFHRYLPETHRETLQALQESQGSIVGIPLFPHYTFAVTGSIIRFFLQHLPEKPISWITQFGVHPQFVSCMQQHIRDCLAAQQIAVEDCYFLFSVHGLPQRHIRLGDPYAQQCQASFEALRGELEGEIAFQSKFGIGKWLDPSTQEVCQSLRTKKRYIVIVPFGFVSDHIETLYEIDHLYVPILLQKEYRVVRIPAINASSRWVSSLAAIVRSSPQETSLEPLLMP.

Residues H184 and E259 each contribute to the Fe cation site.

The protein belongs to the ferrochelatase family.

Its subcellular location is the cytoplasm. It catalyses the reaction heme b + 2 H(+) = protoporphyrin IX + Fe(2+). Its pathway is porphyrin-containing compound metabolism; protoheme biosynthesis; protoheme from protoporphyrin-IX: step 1/1. Functionally, catalyzes the ferrous insertion into protoporphyrin IX. This is Ferrochelatase from Chlamydia trachomatis serovar L2 (strain ATCC VR-902B / DSM 19102 / 434/Bu).